The sequence spans 343 residues: UDP-3-O-acylglucosamine N-acyltransferase (343 aa).

Catalysis depends on His-238, which acts as the Proton acceptor.

Belongs to the transferase hexapeptide repeat family. LpxD subfamily. As to quaternary structure, homotrimer.

It carries out the reaction a UDP-3-O-[(3R)-3-hydroxyacyl]-alpha-D-glucosamine + a (3R)-hydroxyacyl-[ACP] = a UDP-2-N,3-O-bis[(3R)-3-hydroxyacyl]-alpha-D-glucosamine + holo-[ACP] + H(+). It functions in the pathway bacterial outer membrane biogenesis; LPS lipid A biosynthesis. Functionally, catalyzes the N-acylation of UDP-3-O-acylglucosamine using 3-hydroxyacyl-ACP as the acyl donor. Is involved in the biosynthesis of lipid A, a phosphorylated glycolipid that anchors the lipopolysaccharide to the outer membrane of the cell. The chain is UDP-3-O-acylglucosamine N-acyltransferase from Marinomonas sp. (strain MWYL1).